Consider the following 206-residue polypeptide: Ras-related protein Ral-A (206 aa).

Residues 24-29 (GVGKSA), 40-46 (VEDYEPT), and 127-130 (NKSD) contribute to the GTP site. An Effector region motif is present at residues 43-51 (YEPTKADSY). (Microbial infection) O-linked (Glc) threonine; by P.sordellii toxin TcsL glycosylation is present at Thr46. Ser194 bears the Phosphoserine; by AURKA mark. Position 203 is a cysteine methyl ester (Cys203). A lipid anchor (S-geranylgeranyl cysteine) is attached at Cys203. A propeptide spans 204 to 206 (CIL) (removed in mature form).

It belongs to the small GTPase superfamily. Ras family. Interacts (via effector domain) with RALBP1; during mitosis, recruits RALBP1 to the mitochondrion where it promotes DNM1L phosphorylation and mitochondrial fission. Interacts with EXOC2/Sec5 and EXOC8/Exo84; binding to EXOC2 and EXOC8 is mutually exclusive. Interacts with Clostridium exoenzyme C3. Interacts with RALGPS1. Interacts with LPAR1 and LPAR2. Interacts with GRK2 in response to LPAR1 activation. RALA and GRK2 binding to LPAR1 is mutually exclusive. Interacts with CDC42. Post-translationally, phosphorylated. Phosphorylation at Ser-194 by AURKA/Aurora kinase A, during mitosis, induces RALA localization to the mitochondrion where it regulates mitochondrial fission. Prenylation is essential for membrane localization. The geranylgeranylated form and the farnesylated mutant do not undergo alternative prenylation in response to geranylgeranyltransferase I inhibitors (GGTIs) and farnesyltransferase I inhibitors (FTIs). In terms of processing, (Microbial infection) Glucosylated at Thr-46 by P.sordellii toxin TcsL from strain 6018. Monoglucosylation completely prevents the recognition of the downstream effector, blocking the GTPases in their inactive form. Not glucosylated by TcsL from strain VPI 9048.

It is found in the cell membrane. The protein localises to the cleavage furrow. The protein resides in the midbody. It localises to the midbody ring. Its subcellular location is the mitochondrion. It carries out the reaction GTP + H2O = GDP + phosphate + H(+). Alternates between an inactive form bound to GDP and an active form bound to GTP. Activated by a guanine nucleotide-exchange factor (GEF) and inactivated by a GTPase-activating protein (GAP). In terms of biological role, multifunctional GTPase involved in a variety of cellular processes including gene expression, cell migration, cell proliferation, oncogenic transformation and membrane trafficking. Accomplishes its multiple functions by interacting with distinct downstream effectors. Acts as a GTP sensor for GTP-dependent exocytosis of dense core vesicles. The RALA-exocyst complex regulates integrin-dependent membrane raft exocytosis and growth signaling. Key regulator of LPAR1 signaling and competes with GRK2 for binding to LPAR1 thus affecting the signaling properties of the receptor. Required for anchorage-independent proliferation of transformed cells. During mitosis, supports the stabilization and elongation of the intracellular bridge between dividing cells. Cooperates with EXOC2 to recruit other components of the exocyst to the early midbody. During mitosis, also controls mitochondrial fission by recruiting to the mitochondrion RALBP1, which mediates the phosphorylation and activation of DNM1L by the mitotic kinase cyclin B-CDK1. In Homo sapiens (Human), this protein is Ras-related protein Ral-A (RALA).